A 64-amino-acid polypeptide reads, in one-letter code: Large ribosomal subunit protein uL29 (64 aa).

It belongs to the universal ribosomal protein uL29 family.

The polypeptide is Large ribosomal subunit protein uL29 (Nitrosomonas europaea (strain ATCC 19718 / CIP 103999 / KCTC 2705 / NBRC 14298)).